The primary structure comprises 199 residues: FMN-dependent NADH:quinone oxidoreductase (199 aa).

Residues Ser-10, 16-18 (SVS), and 96-99 (MYNF) contribute to the FMN site.

This sequence belongs to the azoreductase type 1 family. As to quaternary structure, homodimer. Requires FMN as cofactor.

The enzyme catalyses 2 a quinone + NADH + H(+) = 2 a 1,4-benzosemiquinone + NAD(+). It carries out the reaction N,N-dimethyl-1,4-phenylenediamine + anthranilate + 2 NAD(+) = 2-(4-dimethylaminophenyl)diazenylbenzoate + 2 NADH + 2 H(+). Its function is as follows. Quinone reductase that provides resistance to thiol-specific stress caused by electrophilic quinones. Functionally, also exhibits azoreductase activity. Catalyzes the reductive cleavage of the azo bond in aromatic azo compounds to the corresponding amines. In Azotobacter vinelandii (strain DJ / ATCC BAA-1303), this protein is FMN-dependent NADH:quinone oxidoreductase.